Here is a 392-residue protein sequence, read N- to C-terminus: Cell division protein FtsZ (392 aa).

GTP is bound by residues 24–28 (GGGCN), 111–113 (GTG), glutamate 142, arginine 145, and aspartate 189.

This sequence belongs to the FtsZ family. In terms of assembly, homodimer. Polymerizes to form a dynamic ring structure in a strictly GTP-dependent manner. Interacts directly with several other division proteins.

The protein resides in the cytoplasm. Its function is as follows. Essential cell division protein that forms a contractile ring structure (Z ring) at the future cell division site. The regulation of the ring assembly controls the timing and the location of cell division. One of the functions of the FtsZ ring is to recruit other cell division proteins to the septum to produce a new cell wall between the dividing cells. Binds GTP and shows GTPase activity. The polypeptide is Cell division protein FtsZ (Neisseria meningitidis serogroup A / serotype 4A (strain DSM 15465 / Z2491)).